The primary structure comprises 238 residues: ATP-dependent Clp protease proteolytic subunit 4 (238 aa).

The active-site Nucleophile is serine 113. Residue histidine 138 is part of the active site.

This sequence belongs to the peptidase S14 family. In terms of assembly, fourteen ClpP subunits assemble into 2 heptameric rings which stack back to back to give a disk-like structure with a central cavity, resembling the structure of eukaryotic proteasomes.

The protein localises to the cytoplasm. It catalyses the reaction Hydrolysis of proteins to small peptides in the presence of ATP and magnesium. alpha-casein is the usual test substrate. In the absence of ATP, only oligopeptides shorter than five residues are hydrolyzed (such as succinyl-Leu-Tyr-|-NHMec, and Leu-Tyr-Leu-|-Tyr-Trp, in which cleavage of the -Tyr-|-Leu- and -Tyr-|-Trp bonds also occurs).. Functionally, cleaves peptides in various proteins in a process that requires ATP hydrolysis. Has a chymotrypsin-like activity. Plays a major role in the degradation of misfolded proteins. This is ATP-dependent Clp protease proteolytic subunit 4 from Frankia casuarinae (strain DSM 45818 / CECT 9043 / HFP020203 / CcI3).